The sequence spans 836 residues: Protein translocase subunit SecA (836 aa).

Residues glutamine 85, 103 to 107 (GEGKT), and aspartate 492 contribute to the ATP site. Residues cysteine 820, cysteine 822, cysteine 831, and cysteine 832 each contribute to the Zn(2+) site.

This sequence belongs to the SecA family. Monomer and homodimer. Part of the essential Sec protein translocation apparatus which comprises SecA, SecYEG and auxiliary proteins SecDF. Other proteins may also be involved. The cofactor is Zn(2+).

The protein localises to the cell membrane. It is found in the cytoplasm. The enzyme catalyses ATP + H2O + cellular proteinSide 1 = ADP + phosphate + cellular proteinSide 2.. Functionally, part of the Sec protein translocase complex. Interacts with the SecYEG preprotein conducting channel. Has a central role in coupling the hydrolysis of ATP to the transfer of proteins into and across the cell membrane, serving as an ATP-driven molecular motor driving the stepwise translocation of polypeptide chains across the membrane. The polypeptide is Protein translocase subunit SecA (Clostridium botulinum (strain Alaska E43 / Type E3)).